The chain runs to 228 residues: Protein GrpE (228 aa).

A compositionally biased stretch (basic and acidic residues) spans 1–22 (MDDKQKTNEEVKASSFDSEKSS). Residues 1 to 71 (MDDKQKTNEE…DQTNTNNNEL (71 aa)) are disordered. A compositionally biased stretch (polar residues) spans 38 to 53 (QNVQHDNGSNPAQKQN).

This sequence belongs to the GrpE family. Homodimer.

It is found in the cytoplasm. In terms of biological role, participates actively in the response to hyperosmotic and heat shock by preventing the aggregation of stress-denatured proteins, in association with DnaK and GrpE. It is the nucleotide exchange factor for DnaK and may function as a thermosensor. Unfolded proteins bind initially to DnaJ; upon interaction with the DnaJ-bound protein, DnaK hydrolyzes its bound ATP, resulting in the formation of a stable complex. GrpE releases ADP from DnaK; ATP binding to DnaK triggers the release of the substrate protein, thus completing the reaction cycle. Several rounds of ATP-dependent interactions between DnaJ, DnaK and GrpE are required for fully efficient folding. The protein is Protein GrpE of Coprothermobacter proteolyticus (strain ATCC 35245 / DSM 5265 / OCM 4 / BT).